Consider the following 463-residue polypeptide: Fumarate hydratase class II (463 aa).

Substrate-binding positions include 97 to 99 (SGT), 128 to 131 (HPND), 138 to 140 (SSN), and threonine 186. The active-site Proton donor/acceptor is the histidine 187. Residue serine 317 is part of the active site. Substrate contacts are provided by residues serine 318 and 323-325 (KVN).

Belongs to the class-II fumarase/aspartase family. Fumarase subfamily. In terms of assembly, homotetramer.

It localises to the cytoplasm. It carries out the reaction (S)-malate = fumarate + H2O. It participates in carbohydrate metabolism; tricarboxylic acid cycle; (S)-malate from fumarate: step 1/1. Functionally, involved in the TCA cycle. Catalyzes the stereospecific interconversion of fumarate to L-malate. This Helicobacter pylori (strain J99 / ATCC 700824) (Campylobacter pylori J99) protein is Fumarate hydratase class II.